A 186-amino-acid polypeptide reads, in one-letter code: Adenine phosphoribosyltransferase (186 aa).

The protein belongs to the purine/pyrimidine phosphoribosyltransferase family. Homodimer.

It localises to the cytoplasm. It carries out the reaction AMP + diphosphate = 5-phospho-alpha-D-ribose 1-diphosphate + adenine. Its pathway is purine metabolism; AMP biosynthesis via salvage pathway; AMP from adenine: step 1/1. Its function is as follows. Catalyzes a salvage reaction resulting in the formation of AMP, that is energically less costly than de novo synthesis. The polypeptide is Adenine phosphoribosyltransferase (Xanthomonas oryzae pv. oryzae (strain MAFF 311018)).